Consider the following 150-residue polypeptide: Large ribosomal subunit protein uL23 (150 aa).

The segment at Met1 to Ser24 is disordered. Residues Thr7–Lys18 are compositionally biased toward low complexity.

The protein belongs to the universal ribosomal protein uL23 family.

The sequence is that of Large ribosomal subunit protein uL23 (RPL23A) from Tetrahymena thermophila (strain SB210).